A 449-amino-acid chain; its full sequence is Probable glycine dehydrogenase (decarboxylating) subunit 1 (449 aa).

It belongs to the GcvP family. N-terminal subunit subfamily. In terms of assembly, the glycine cleavage system is composed of four proteins: P, T, L and H. In this organism, the P 'protein' is a heterodimer of two subunits.

The catalysed reaction is N(6)-[(R)-lipoyl]-L-lysyl-[glycine-cleavage complex H protein] + glycine + H(+) = N(6)-[(R)-S(8)-aminomethyldihydrolipoyl]-L-lysyl-[glycine-cleavage complex H protein] + CO2. In terms of biological role, the glycine cleavage system catalyzes the degradation of glycine. The P protein binds the alpha-amino group of glycine through its pyridoxal phosphate cofactor; CO(2) is released and the remaining methylamine moiety is then transferred to the lipoamide cofactor of the H protein. The chain is Probable glycine dehydrogenase (decarboxylating) subunit 1 from Pyrococcus horikoshii (strain ATCC 700860 / DSM 12428 / JCM 9974 / NBRC 100139 / OT-3).